The chain runs to 509 residues: Thymus-specific serine protease (509 aa).

Positions 1–22 (MAVKAPWLGFLLLVSLWGLSTP) are cleaved as a signal peptide. 2 N-linked (GlcNAc...) asparagine glycosylation sites follow: N69 and N171. Catalysis depends on S184, which acts as the Charge relay system. N-linked (GlcNAc...) asparagine glycosylation is present at N320. Catalysis depends on charge relay system residues D446 and H471.

It belongs to the peptidase S28 family. As to expression, expressed predominantly in cortical thymic epithelial cells, with highest expression around vessels and the thymic capsule.

The protein localises to the cytoplasmic vesicle. Functionally, protease that may play a role in T-cell development. This is Thymus-specific serine protease (Prss16) from Mus musculus (Mouse).